The following is an 817-amino-acid chain: Leucine--tRNA ligase (817 aa).

Positions P40 to H50 match the 'HIGH' region motif. A 'KMSKS' region motif is present at residues K578–S582. An ATP-binding site is contributed by K581.

This sequence belongs to the class-I aminoacyl-tRNA synthetase family.

It is found in the cytoplasm. The enzyme catalyses tRNA(Leu) + L-leucine + ATP = L-leucyl-tRNA(Leu) + AMP + diphosphate. The chain is Leucine--tRNA ligase from Caldicellulosiruptor saccharolyticus (strain ATCC 43494 / DSM 8903 / Tp8T 6331).